The following is a 278-amino-acid chain: Protein U52 (278 aa).

A compositionally biased stretch (polar residues) spans 1–18 (MTRVSSVSASCTTTNPPK). Positions 1–25 (MTRVSSVSASCTTTNPPKNTREDMS) are disordered.

It belongs to the herpesviridae UL79 family.

In Elephas maximus (Indian elephant), this protein is Protein U52.